Reading from the N-terminus, the 405-residue chain is MQEKDASSQGFLPHFQHFATQAIHVGQDPEQWTSRAVVPPISLSTTFKQGAPGQHSGFEYSRSGNPTRNCLEKAVAALDGAKYCLAFASGLAATVTITHLLKAGDQIICMDDVYGGTNRYFRQVASEFGLKISFVDCSKIKLLEAAITPETKLVWIETPTNPTQKVIDIEGCAHIVHKHGDIILVVDNTFMSPYFQRPLALGADISMYSATKYMNGHSDVVMGLVSVNCESLHNRLRFLQNSLGAVPSPIDCYLCNRGLKTLHVRMEKHFKNGMAVAQFLESNPWVEKVIYPGLPSHPQHELVKRQCTGCTGMVTFYIKGTLQHAEIFLKNLKLFTLAESLGGFESLAELPAIMTHASVLKNDRDVLGISDTLIRLSVGLEDEEDLLEDLDQALKAAHPPSGSHS.

Positions 62, 114, and 119 each coordinate substrate. Lys212 bears the N6-(pyridoxal phosphate)lysine mark. Glu339 is a substrate binding site.

The protein belongs to the trans-sulfuration enzymes family. As to quaternary structure, homotetramer. Interacts with CALM in a calcium-dependent manner. Pyridoxal 5'-phosphate serves as cofactor. In terms of tissue distribution, highly expressed in liver. Also in muscle and lower expression in most tissues except heart, pituitary gland, spleen, thymus, and vascular tissue, where it is hardly detected.

It localises to the cytoplasm. The catalysed reaction is L,L-cystathionine + H2O = 2-oxobutanoate + L-cysteine + NH4(+). The enzyme catalyses L-cysteine + H2O = hydrogen sulfide + pyruvate + NH4(+) + H(+). It carries out the reaction L-homocysteine + H2O = 2-oxobutanoate + hydrogen sulfide + NH4(+) + H(+). It catalyses the reaction L-homoserine = 2-oxobutanoate + NH4(+). The catalysed reaction is L-selenocystathionine + H2O = L-selenocysteine + 2-oxobutanoate + NH4(+). The protein operates within amino-acid biosynthesis; L-cysteine biosynthesis; L-cysteine from L-homocysteine and L-serine: step 2/2. With respect to regulation, inhibited by propargylglycine, trifluoroalanine and aminoethoxyvinylglycine. In terms of biological role, catalyzes the last step in the trans-sulfuration pathway from L-methionine to L-cysteine in a pyridoxal-5'-phosphate (PLP)-dependent manner, which consists on cleaving the L,L-cystathionine molecule into L-cysteine, ammonia and 2-oxobutanoate. Part of the L-cysteine derived from the trans-sulfuration pathway is utilized for biosynthesis of the ubiquitous antioxidant glutathione. Besides its role in the conversion of L-cystathionine into L-cysteine, it utilizes L-cysteine and L-homocysteine as substrates (at much lower rates than L,L-cystathionine) to produce the endogenous gaseous signaling molecule hydrogen sulfide (H2S). In vitro, it converts two L-cysteine molecules into lanthionine and H2S, also two L-homocysteine molecules to homolanthionine and H2S, which can be particularly relevant under conditions of severe hyperhomocysteinemia (which is a risk factor for cardiovascular disease, diabetes, and Alzheimer's disease). Lanthionine and homolanthionine are structural homologs of L,L-cystathionine that differ by the absence or presence of an extra methylene group, respectively. Acts as a cysteine-protein sulfhydrase by mediating sulfhydration of target proteins: sulfhydration consists of converting -SH groups into -SSH on specific cysteine residues of target proteins such as GAPDH, PTPN1 and NF-kappa-B subunit RELA, thereby regulating their function. By generating the gasotransmitter H2S, it participates in a number of physiological processes such as vasodilation, bone protection, and inflammation. Plays an essential role in myogenesis by contributing to the biogenesis of H2S in skeletal muscle tissue. Can also accept homoserine as substrate. Catalyzes the elimination of selenocystathionine (which can be derived from the diet) to yield selenocysteine, ammonia and 2-oxobutanoate. In Homo sapiens (Human), this protein is Cystathionine gamma-lyase (CTH).